The chain runs to 496 residues: Genome polyprotein (496 aa).

Topologically, residues 1–447 (SRCTHLENRD…HTVLGGAFNS (447 aa)) are extracellular. 6 cysteine pairs are disulfide-bonded: C3-C30, C60-C116, C60-C121, C74-C105, C92-C116, and C92-C121. The segment at 98-111 (DRGWGNHCGLFGKG) is fusion peptide. The N-linked (GlcNAc...) asparagine; by host glycan is linked to N154. 2 disulfides stabilise this stretch: C186–C290 and C307–C338. The helical transmembrane segment at 448–468 (IFGGVGFLPKLLMGVALAWLG) threads the bilayer. At 469–479 (LNTRNPTMSMS) the chain is on the cytoplasmic side. Residues 480-496 (FLLTGGLVLAMTLGVGA) traverse the membrane as a helical segment.

As to quaternary structure, homodimer; in the endoplasmic reticulum and Golgi. N-glycosylated.

It localises to the virion membrane. The protein resides in the host endoplasmic reticulum membrane. Its function is as follows. Binds to host cell surface receptor and mediates fusion between viral and cellular membranes. Envelope protein is synthesized in the endoplasmic reticulum in the form of heterodimer with protein prM. They play a role in virion budding in the ER, and the newly formed immature particle is covered with 60 spikes composed of heterodimer between precursor prM and envelope protein E. The virion is transported to the Golgi apparatus where the low pH causes dissociation of PrM-E heterodimers and formation of E homodimers. prM-E cleavage is ineficient, and many virions are only partially matured. These uncleaved prM would play a role in immune evasion. This Bos taurus (Bovine) protein is Genome polyprotein.